The sequence spans 60 residues: Large ribosomal subunit protein uL30 (60 aa).

This sequence belongs to the universal ribosomal protein uL30 family. As to quaternary structure, part of the 50S ribosomal subunit.

This Streptococcus uberis (strain ATCC BAA-854 / 0140J) protein is Large ribosomal subunit protein uL30.